The chain runs to 2153 residues: RNA-directed RNA polymerase L (2153 aa).

Mn(2+) contacts are provided by His36, Glu54, Asp97, Glu110, and Val111. Catalysis depends on Lys124, which acts as the For endonuclease activity. A RdRp catalytic domain is found at Thr957–Met1143. Residue Asp1100 coordinates Mg(2+). Positions Lys1291–Tyr2153 are interaction with the viral nucleoprotein.

Belongs to the Bunyavirales RNA polymerase family. In terms of assembly, interacts with the viral nucleoprotein; this interaction is required for RdRp function. Requires Mn(2+) as cofactor. Mg(2+) is required as a cofactor.

The protein localises to the host cytoplasm. It localises to the host perinuclear region. The catalysed reaction is RNA(n) + a ribonucleoside 5'-triphosphate = RNA(n+1) + diphosphate. RNA-dependent RNA polymerase, which is responsible for the replication and transcription of the viral RNA genome using antigenomic RNA as an intermediate. During transcription, synthesizes subgenomic RNAs and assures their capping by a cap-snatching mechanism, which involves the endonuclease activity cleaving the host capped pre-mRNAs. These short capped RNAs are then used as primers for viral transcription. Cleaves ssRNA substrates but not DNA. Seems to downregulate the expression of its own and heterologous mRNAs through its endonuclease activity. In Sin Nombre orthohantavirus (SNV), this protein is RNA-directed RNA polymerase L.